A 1004-amino-acid chain; its full sequence is Ovochymase-2 (1004 aa).

The N-terminal stretch at 1–19 (MPTRNLLLGSILLSLAVKG) is a signal peptide. The propeptide at 20 to 45 (DPGPHRGARCGVSPLGSATELNYLSR) is activation peptide. The Peptidase S1 1 domain maps to 46 to 295 (IVGGRESKKG…LLGWVSSQLN (250 aa)). C71 and C87 are oxidised to a cystine. Catalysis depends on H86, which acts as the Charge relay system. E113 contacts Ca(2+). The N-linked (GlcNAc...) asparagine glycan is linked to N128. Catalysis depends on D136, which acts as the Charge relay system. 3 disulfide bridges follow: C170–C240, C201–C219, and C230–C259. The active-site Charge relay system is S234. CUB domains are found at residues 309–419 (QDGV…YSAV) and 429–541 (CGSF…FTFV). N-linked (GlcNAc...) asparagine glycosylation is present at N351. The cysteines at positions 363 and 382 are disulfide-linked. A glycan (N-linked (GlcNAc...) asparagine) is linked at N408. 2 disulfides stabilise this stretch: C429–C456 and C483–C504. The segment covering 547–558 (VEDSRQGNMPST) has biased composition (polar residues). The tract at residues 547-566 (VEDSRQGNMPSTNKKETTAQ) is disordered. Residues 580 to 820 (IYNSIAKVEE…FIDWIRQIMS (241 aa)) form the Peptidase S1 2 domain. A propeptide spans 584 to 1004 (IAKVEEAVPH…VVPDSDSSEP (421 aa)) (activation peptide). 4 disulfide bridges follow: C609-C625, C706-C776, C737-C754, and C766-C796. A glycan (N-linked (GlcNAc...) asparagine) is linked at N763. N940 carries an N-linked (GlcNAc...) asparagine glycan.

Belongs to the peptidase S1 family. The catalytically inactive 110 kDa form is processed both N- and C-terminally to give rise to the 66 kDa catalytically active form. As to expression, specifically expressed in the pars recta oviduct.

The protein localises to the secreted. It catalyses the reaction Preferential cleavage at 371-Gly-Ser-Arg-|-Trp-374 of glycoprotein gp43 in Xenopus laevis coelemic egg envelope to yield gp41.. Converts the glycoprotein envelope surrounding the egg from an unfertilizable to a fertilizable form during its transit through the pars recta portion of the oviduct by selectively hydrolyzing the envelope glycoprotein gp43. The egg envelope is converted to a sperm-penetrable form, via an increase in sperm binding. The chain is Ovochymase-2 (ovch2) from Xenopus laevis (African clawed frog).